The following is a 701-amino-acid chain: Polyribonucleotide nucleotidyltransferase (701 aa).

Asp-485 and Asp-491 together coordinate Mg(2+). A KH domain is found at 552–611 (PRIIKIRINPEKIRDVIGKGGAVIRALTEETGTTIDITDDGTVMIACVNAEGGELAKKRI). The S1 motif domain occupies 621–689 (GRVYDGTVLK…DKGRLRLSMK (69 aa)).

Belongs to the polyribonucleotide nucleotidyltransferase family. It depends on Mg(2+) as a cofactor.

The protein resides in the cytoplasm. The enzyme catalyses RNA(n+1) + phosphate = RNA(n) + a ribonucleoside 5'-diphosphate. Involved in mRNA degradation. Catalyzes the phosphorolysis of single-stranded polyribonucleotides processively in the 3'- to 5'-direction. The sequence is that of Polyribonucleotide nucleotidyltransferase from Nitrosospira multiformis (strain ATCC 25196 / NCIMB 11849 / C 71).